The chain runs to 30 residues: Methanobactin mb-OB3b (30 aa).

The propeptide occupies 1–19 (MTVKIAQKKVLPVIGRAAA). Residues 20–21 (LC) constitute a cross-link (2-(3-methylbutanoyl)-5-hydroxyoxazole-4-carbothionic acid (Leu-Cys)). Cu(2+)-binding residues include Cys21 and Cys27. A disulfide bond links Cys24 and Cys29. The proline 5-hydroxy-oxazole-4-carbothionic acid (Pro-Cys) cross-link spans 26–27 (PC).

Monomer. In the absence of copper, may exist as a dimer or an oligomer.

The protein resides in the secreted. The protein localises to the cytoplasm. It catalyses the reaction 2 superoxide + 2 H(+) = H2O2 + O2. Chalkophore involved in scavenging, uptake and suppression of toxicity of copper. Each apo-methanobactin (apo-mb) complexes 1 Cu(2+) or Cu(1+) ion to form Cu(1+)-mb (Cu-mb) which is then taken up by the cell. Enhances growth rate in the presence of copper and reduces growth lag upon exposition to elevated levels of copper. Cu-mb contributes to the switchover from soluble methane monooxygenase (sMMO) to the membrane-bound particulate MMO (pMMO) by inducing transcription of pMMO subunit A. It also stimulates the enzymatic activity of pMMO. In the absence of copper, binds other metal ions, like Zn(2+), Ag(1+), Au(3+), Co(2+), Cd(2+), Fe(3+), Hg(2+), Mn(2+), Ni(2+), Pb(2+) or U(6+), but not Ba(2+), Ca(2+), La(2+), Mg(2+) or Sr(2+). Uptake is an active process, which may involve TonB-dependent transporters, and as such does not involve porins. Cu-Mb can be taken up by other methanotrophic bacteria but not by E.coli. Has Cu-dependent superoxide dismutase-like activity. Shows reductant-dependent oxidase and hydrogen peroxide reductase activities. Reduces copper-levels in liver in a rat model of Wilson disease. The protein is Methanobactin mb-OB3b of Methylosinus trichosporium.